The primary structure comprises 122 residues: Large ribosomal subunit protein uL14 (122 aa).

This sequence belongs to the universal ribosomal protein uL14 family. In terms of assembly, part of the 50S ribosomal subunit. Forms a cluster with proteins L3 and L19. In the 70S ribosome, L14 and L19 interact and together make contacts with the 16S rRNA in bridges B5 and B8.

Functionally, binds to 23S rRNA. Forms part of two intersubunit bridges in the 70S ribosome. This is Large ribosomal subunit protein uL14 from Lysinibacillus sphaericus (strain C3-41).